We begin with the raw amino-acid sequence, 1116 residues long: Minor outer capsid protein P2 (1116 aa).

Residues 929 to 1116 form the PPPDE domain; sequence ENNAANFFER…IGSNCSKLCA (188 aa). Residues H953 and C1111 contribute to the active site.

It belongs to the phytoreovirus minor outer capsid protein P2 family. Interacts with host ent-kaurene oxidases OSKO1, OSKO2, OSKOL4 and OSKOL5; this interaction.

It localises to the virion. The protein resides in the host cytoplasm. Its function is as follows. Minor capsid protein present in the outer capsid, which is required for adsorption of the virus onto host insect cells (Potential). Could play a role in the host plant virus induced dwarfism. The sequence is that of Minor outer capsid protein P2 from Rice dwarf virus (isolate Fujian) (RDV).